Here is a 58-residue protein sequence, read N- to C-terminus: Small ribosomal subunit protein eS30 (58 aa).

The tract at residues 1–58 is disordered; the sequence is MGKVHGSLARAGKVKNQTPKVPKLDKKKRLTGRAKKRQLYNRRFSDNGGRKKGPNSKA. Basic residues predominate over residues 25-40; the sequence is DKKKRLTGRAKKRQLY.

Belongs to the eukaryotic ribosomal protein eS30 family. In terms of assembly, component of the small ribosomal subunit. Mature ribosomes consist of a small (40S) and a large (60S) subunit. The 40S subunit contains about 32 different proteins and 1 molecule of RNA (18S). The 60S subunit contains about 42 different proteins and 3 molecules of RNA (28S, 5.8S and 5S).

The protein localises to the cytoplasm. Component of the ribosome, a large ribonucleoprotein complex responsible for the synthesis of proteins in the cell. The small ribosomal subunit (SSU) binds messenger RNAs (mRNAs) and translates the encoded message by selecting cognate aminoacyl-transfer RNA (tRNA) molecules. The large subunit (LSU) contains the ribosomal catalytic site termed the peptidyl transferase center (PTC), which catalyzes the formation of peptide bonds, thereby polymerizing the amino acids delivered by tRNAs into a polypeptide chain. The nascent polypeptides leave the ribosome through a tunnel in the LSU and interact with protein factors that function in enzymatic processing, targeting, and the membrane insertion of nascent chains at the exit of the ribosomal tunnel. The protein is Small ribosomal subunit protein eS30 of Plasmodium falciparum (isolate 3D7).